We begin with the raw amino-acid sequence, 428 residues long: Sulfite exporter TauE/SafE family protein 6 (428 aa).

11 helical membrane-spanning segments follow: residues Met-1 to Gln-21, Ala-61 to Ile-81, Gly-82 to Ala-102, Phe-105 to Cys-125, Leu-128 to Gly-148, Val-149 to Met-169, Tyr-245 to Ser-265, Val-294 to Ile-314, Thr-332 to Met-352, Glu-356 to Ala-376, and Ile-388 to Gly-408.

Belongs to the 4-toluene sulfonate uptake permease (TSUP) (TC 2.A.102) family.

The protein resides in the membrane. This Arabidopsis thaliana (Mouse-ear cress) protein is Sulfite exporter TauE/SafE family protein 6.